The chain runs to 650 residues: Histone-lysine N-methyltransferase family member SUVH9 (650 aa).

2 disordered regions span residues 1-24 (MGSSHIPLDPSLNPSPSLIPKLEP) and 95-129 (PVEENPEPEPNPYSTSDSSPSVATQRPRPQPRSSE). Residues 7 to 20 (PLDPSLNPSPSLIP) are compositionally biased toward low complexity. The segment covering 107 to 118 (YSTSDSSPSVAT) has biased composition (polar residues). Residues 205 to 352 (GSIPGVQVGD…FGVFKYRLER (148 aa)) enclose the YDG domain. The Pre-SET domain occupies 432-490 (SGCDCVNGCGSGCLCEAKNSGEIAYDYNGTLIRQKPLIHECGSACQCPPSCRNRVTQKG). Cysteine 434, cysteine 436, cysteine 440, cysteine 444, cysteine 446, cysteine 472, cysteine 476, cysteine 478, and cysteine 482 together coordinate Zn(2+). Positions 493–637 (NRLEVFRSLE…PMTELSLDYG (145 aa)) constitute an SET domain.

It belongs to the class V-like SAM-binding methyltransferase superfamily. Histone-lysine methyltransferase family. Suvar3-9 subfamily. Component of an RNA-directed DNA methylation (RdDM) complex that contains at least MORC6, MORC1/CRT1, MORC2, SWI3D and SUVH9. Interacts directly with MORC6, MORC2 and MORC1/CRT1. Interacts with SWI3B, SWI3C and SWI3D.

The protein resides in the nucleus. It is found in the chromosome. Its subcellular location is the centromere. Its function is as follows. Histone methyltransferase family member that plays a role in gene silencing. Together with MORC6 and SUVH2, regulates the silencing of some transposable elements (TEs). According to PubMed:19043555, the protein does not bind S-adenosyl-L-methionine and lacks methyltransferase activity. Instead, it may function downstream of DRM2 in RNA-directed DNA methylation, binding to methylated DNA and recruiting DNA-directed RNA polymerase V to chromatin. In Arabidopsis thaliana (Mouse-ear cress), this protein is Histone-lysine N-methyltransferase family member SUVH9 (SUVH9).